We begin with the raw amino-acid sequence, 88 residues long: N-alpha-acetyltransferase 38, NatC auxiliary subunit (88 aa).

A Sm domain is found at 1–72 (MDILKLSDFI…VKTIMIDKPV (72 aa)).

In terms of assembly, component of the N-terminal acetyltransferase C (NatC) complex, composed of the catalytic subunit Naa30/MAK3, a large auxiliary subunit Naa35/MAK10 and a small auxiliary subunit Naa38/MAK31.

In terms of biological role, component of the NatC N-terminal acetyltransferase, which associates with the ribosome to acetylate nascent protein chains in a cotranslational manner. NatC acetylates protein N-termini starting with methionine, followed by a hydrophobic or amphipathic amino acid, with amino acids at positions 3 and 4 also contributing to NatC recognition. The first 4 amino acids of cognate substrates are recognized at the Naa30/MAK3-Naa35/MAK10 interface. NatC-dependent acetylation targets various substrate proteins to specific subcellular sites, including isoform 2 of tRNA-specific methyltransferase Trm1 to the inner nuclear membrane. Catalyzes the acetylation of the N-terminal Met of ARF-like GTPase ARL3, which is required for its Golgi localization via interaction with the Golgi-localized integral membrane protein SYS1, which may serve as a receptor for acetylated ARL3. Catalyzes the acetylation of the N-terminal Met of L-A virus Gag protein. MAK31 is necessary for the structural stability of L-A double-stranded RNA-containing particles. Necessary for growth at 37 degrees Celsius as well as for maintenance of the killer plasmid. This Saccharomyces cerevisiae (strain ATCC 204508 / S288c) (Baker's yeast) protein is N-alpha-acetyltransferase 38, NatC auxiliary subunit (MAK31).